The sequence spans 806 residues: Volume-regulated anion channel subunit LRRC8E (806 aa).

The Cytoplasmic segment spans residues Met-1 to Pro-22. Residues Trp-23–Cys-43 form a helical membrane-spanning segment. Residues Thr-44–Lys-130 are Extracellular-facing. A disulfide bridge connects residues Cys-54 and Cys-311. N-linked (GlcNAc...) asparagine glycosylation is found at Asn-57 and Asn-80. The tract at residues Gln-75–Leu-104 is disordered. A helical transmembrane segment spans residues Tyr-131–Phe-151. Over Lys-152–Lys-275 the chain is Cytoplasmic. Residues Glu-182–Leu-217 are disordered. Over residues Ser-188–Phe-207 the composition is skewed to basic and acidic residues. A helical membrane pass occupies residues Phe-276–Cys-296. The Extracellular segment spans residues Ser-297–Ala-323. A glycan (N-linked (GlcNAc...) asparagine) is linked at Asn-312. Residues Ile-324–Leu-344 traverse the membrane as a helical segment. Topologically, residues Phe-345 to Asp-806 are cytoplasmic. 9 LRR repeats span residues His-569–Lys-589, Leu-593–Leu-614, Asn-616–Gln-637, Lys-641–Leu-662, Gly-664–Cys-685, Lys-687–Leu-708, Leu-710–Cys-731, Lys-733–Leu-754, and Cys-756–Cys-777.

This sequence belongs to the LRRC8 family. Heterohexamer; oligomerizes with other LRRC8 proteins (lrrc8a, lrrc8c, lrrc8d and/or lrrc8b) to form a heterohexamer. Detected in a channel complex that contains lrrc8a, lrrc8c and lrrc8e. In vivo, the subunit composition may depend primarily on expression levels, and heterooligomeric channels containing various proportions of the different LRRC8 proteins may coexist.

The protein resides in the cell membrane. Its subcellular location is the endoplasmic reticulum membrane. It localises to the lysosome membrane. The enzyme catalyses chloride(in) = chloride(out). It carries out the reaction iodide(out) = iodide(in). The catalysed reaction is taurine(out) = taurine(in). It catalyses the reaction 2',3'-cGAMP(out) = 2',3'-cGAMP(in). Functionally, non-essential component of the volume-regulated anion channel (VRAC, also named VSOAC channel), an anion channel required to maintain a constant cell volume in response to extracellular or intracellular osmotic changes. The VRAC channel conducts iodide better than chloride and can also conduct organic osmolytes like taurine. Mediates efflux of amino acids, such as aspartate, in response to osmotic stress. The VRAC channel also mediates transport of immunoreactive cyclic dinucleotide GMP-AMP (2'-3'-cGAMP), an immune messenger produced in response to DNA virus in the cytosol. Channel activity requires lrrc8a plus at least one other family member (lrrc8b, lrrc8c, lrrc8d or lrrc8e); channel characteristics depend on the precise subunit composition. Also plays a role in lysosome homeostasis by forming functional lysosomal VRAC channels in response to low cytoplasmic ionic strength condition: lysosomal VRAC channels are necessary for the formation of large lysosome-derived vacuoles, which store and then expel excess water to maintain cytosolic water homeostasis. In Xenopus laevis (African clawed frog), this protein is Volume-regulated anion channel subunit LRRC8E.